Consider the following 177-residue polypeptide: MKLKALILDEKAMNRTLTRISHEIIEKNKGAEDIVLVGIKRRGYPLAKRISENIYKIEKLKLRVESVDISLYRDDLSRLSDQPAIKKSHPIDVEDKKIILVDDVIYTGRTARAAIDAIIHSGRPKLIQLAVLIDRGHRELPIRADYVGKNIPTSRDEIVSVEISEIDKCNSVKIYEV.

The PRPP-binding motif lies at 98–110 (IILVDDVIYTGRT).

This sequence belongs to the purine/pyrimidine phosphoribosyltransferase family. PyrR subfamily. In terms of assembly, homodimer and homohexamer; in equilibrium.

It carries out the reaction UMP + diphosphate = 5-phospho-alpha-D-ribose 1-diphosphate + uracil. Its function is as follows. Regulates transcriptional attenuation of the pyrimidine nucleotide (pyr) operon by binding in a uridine-dependent manner to specific sites on pyr mRNA. This disrupts an antiterminator hairpin in the RNA and favors formation of a downstream transcription terminator, leading to a reduced expression of downstream genes. Also displays a weak uracil phosphoribosyltransferase activity which is not physiologically significant. The chain is Bifunctional protein PyrR from Clostridium kluyveri (strain ATCC 8527 / DSM 555 / NBRC 12016 / NCIMB 10680 / K1).